We begin with the raw amino-acid sequence, 74 residues long: Exodeoxyribonuclease 7 small subunit (74 aa).

This sequence belongs to the XseB family. Heterooligomer composed of large and small subunits.

It localises to the cytoplasm. The enzyme catalyses Exonucleolytic cleavage in either 5'- to 3'- or 3'- to 5'-direction to yield nucleoside 5'-phosphates.. Functionally, bidirectionally degrades single-stranded DNA into large acid-insoluble oligonucleotides, which are then degraded further into small acid-soluble oligonucleotides. The sequence is that of Exodeoxyribonuclease 7 small subunit from Glaesserella parasuis serovar 5 (strain SH0165) (Haemophilus parasuis).